The chain runs to 331 residues: Phosphoribosylformylglycinamidine cyclo-ligase (331 aa).

Belongs to the AIR synthase family.

Its subcellular location is the cytoplasm. The catalysed reaction is 2-formamido-N(1)-(5-O-phospho-beta-D-ribosyl)acetamidine + ATP = 5-amino-1-(5-phospho-beta-D-ribosyl)imidazole + ADP + phosphate + H(+). It participates in purine metabolism; IMP biosynthesis via de novo pathway; 5-amino-1-(5-phospho-D-ribosyl)imidazole from N(2)-formyl-N(1)-(5-phospho-D-ribosyl)glycinamide: step 2/2. The chain is Phosphoribosylformylglycinamidine cyclo-ligase from Clostridium botulinum (strain Okra / Type B1).